Here is a 456-residue protein sequence, read N- to C-terminus: Hydroxyproline dehydrogenase (456 aa).

2 positions are modified to N6-acetyllysine: lysine 310 and lysine 320.

This sequence belongs to the proline oxidase family. FAD serves as cofactor.

The enzyme catalyses trans-4-hydroxy-L-proline + a quinone = (3R,5S)-1-pyrroline-3-hydroxy-5-carboxylate + a quinol + H(+). The catalysed reaction is L-proline + a quinone = (S)-1-pyrroline-5-carboxylate + a quinol + H(+). Dehydrogenase that converts trans-4-L-hydroxyproline to delta-1-pyrroline-3-hydroxy-5-carboxylate (Hyp) using ubiquinone-10 as the terminal electron acceptor. Can also use proline as a substrate but with a very much lower efficiency. Does not react with other diastereomers of Hyp: trans-4-D-hydroxyproline and cis-4-L-hydroxyproline. Ubiquininone analogs such as menadione, duroquinone and ubiquinone-1 react more efficiently than oxygen as the terminal electron acceptor during catalysis. The polypeptide is Hydroxyproline dehydrogenase (Rattus norvegicus (Rat)).